The primary structure comprises 348 residues: MSQYKTGLLLIHPAVTTTPELVENTKAQAASKKVKFVDQFLINKLNDGSITLENAKYETVHYLTPEAQTDIKFPKKLISVLADSLKPNGSLIGLSDIYKVDALINGFEIINEPDYCWIKMDSSKLNQTVSIPLKKKKTNNTKLQSGSKLPTFKKASSSTSNLPSFKKADHSRQPIVKETDSFKPPSFKMTTEPKVYRVVDDLIEDSDDDDFSSDSSKAQYFDQVDTSDDSIEEEELIDEDGSGKSMITMITCGKSKTKKKKACKDCTCGMKEQEENEINDIRSQQDKVVKFTEDELTEIDFTIDGKKVGGCGSCSLGDAFRCSGCPYLGLPAFKPGQPINLDSISDDL.

The tract at residues 1-158 (MSQYKTGLLL…LPTFKKASSS (158 aa)) is N-terminal SAM-like domain. Residues 137–170 (KTNNTKLQSGSKLPTFKKASSSTSNLPSFKKADH) form a disordered region. Positions 144-163 (QSGSKLPTFKKASSSTSNLP) are enriched in polar residues. Positions 159-242 (TSNLPSFKKA…EEELIDEDGS (84 aa)) are linker. Position 206 is a phosphoserine (Ser-206). 4 residues coordinate [2Fe-2S] cluster: Cys-252, Cys-263, Cys-266, and Cys-268. The tract at residues 252 to 268 (CGKSKTKKKKACKDCTC) is fe-S binding site A. Residues Cys-311, Cys-314, Cys-322, and Cys-325 each coordinate [4Fe-4S] cluster. 2 consecutive short sequence motifs (cx2C motif) follow at residues 311–314 (CGSC) and 322–325 (CSGC). A fe-S binding site B region spans residues 311 to 325 (CGSCSLGDAFRCSGC).

Belongs to the anamorsin family. Monomer. Interacts with TAH18. Interacts with MIA40. Requires [2Fe-2S] cluster as cofactor. It depends on [4Fe-4S] cluster as a cofactor. Ubiquitinated.

It is found in the cytoplasm. The protein resides in the mitochondrion intermembrane space. Component of the cytosolic iron-sulfur (Fe-S) protein assembly (CIA) machinery required for the maturation of extramitochondrial Fe-S proteins. Part of an electron transfer chain functioning in an early step of cytosolic Fe-S biogenesis, facilitating the de novo assembly of a [4Fe-4S] cluster on the scaffold complex CFD1-NBP35. Electrons are transferred to DRE2 from NADPH via the FAD- and FMN-containing protein TAH18. TAH18-DRE2 are also required for the assembly of the diferric tyrosyl radical cofactor of ribonucleotide reductase (RNR), probably by providing electrons for reduction during radical cofactor maturation in the catalytic small subunit RNR2. Has anti-apoptotic effects in the cell. Involved in negative control of H(2)O(2)-induced cell death. The polypeptide is Fe-S cluster assembly protein DRE2 (Saccharomyces cerevisiae (strain ATCC 204508 / S288c) (Baker's yeast)).